A 178-amino-acid chain; its full sequence is Large ribosomal subunit protein uL5 (178 aa).

The protein belongs to the universal ribosomal protein uL5 family. In terms of assembly, part of the 50S ribosomal subunit; part of the 5S rRNA/L5/L18/L25 subcomplex. Contacts the 5S rRNA and the P site tRNA. Forms a bridge to the 30S subunit in the 70S ribosome.

Its function is as follows. This is one of the proteins that bind and probably mediate the attachment of the 5S RNA into the large ribosomal subunit, where it forms part of the central protuberance. In the 70S ribosome it contacts protein S13 of the 30S subunit (bridge B1b), connecting the 2 subunits; this bridge is implicated in subunit movement. Contacts the P site tRNA; the 5S rRNA and some of its associated proteins might help stabilize positioning of ribosome-bound tRNAs. In Acinetobacter baumannii (strain AB0057), this protein is Large ribosomal subunit protein uL5.